The following is a 64-amino-acid chain: H/ACA ribonucleoprotein complex subunit 3 (64 aa).

The protein belongs to the NOP10 family. As to quaternary structure, component of the box H/ACA small nucleolar ribonucleoprotein (H/ACA snoRNP) complex consisting of Nop60B, Gar1, NPH2 and Nop10, and associated with H/ACA-type snoRNAs.

The protein resides in the nucleus. It localises to the nucleolus. Functionally, component of the box H/ACA small nucleolar ribonucleoprotein (H/ACA snoRNP) complex, which catalyzes pseudouridylation of rRNA. This involves the isomerization of uridine such that the ribose is subsequently attached to C5, instead of the normal N1. Pseudouridine ('psi') residues may serve to stabilize the conformation of rRNAs. Required for ribosome biogenesis. H/ACA snoRNP complex-dependent ribosome biogenesis is important in female germline cell differentiation during oogenesis. The sequence is that of H/ACA ribonucleoprotein complex subunit 3 from Drosophila melanogaster (Fruit fly).